Reading from the N-terminus, the 314-residue chain is uncharacterized protein (314 aa).

The segment at 1–70 is disordered; it reads MAGNSQRRGA…QGRHKKTDDT (70 aa). The span at 44 to 65 shows a compositional bias: basic residues; that stretch reads RPHHPAGKRAAKAARQAQGRHK. Residues glycine 265, isoleucine 285, and leucine 294 each coordinate S-adenosyl-L-methionine.

It belongs to the class IV-like SAM-binding methyltransferase superfamily. RNA methyltransferase TrmH family.

This is an uncharacterized protein from Mycolicibacterium gilvum (strain PYR-GCK) (Mycobacterium gilvum (strain PYR-GCK)).